We begin with the raw amino-acid sequence, 339 residues long: Nucleoid-associated protein Asuc_0779 (339 aa).

Belongs to the YejK family.

Its subcellular location is the cytoplasm. The protein localises to the nucleoid. The protein is Nucleoid-associated protein Asuc_0779 of Actinobacillus succinogenes (strain ATCC 55618 / DSM 22257 / CCUG 43843 / 130Z).